A 95-amino-acid chain; its full sequence is Protein IDA-LIKE 2 (95 aa).

An N-terminal signal peptide occupies residues 1 to 35; that stretch reads MSSRNQRSRITSSFFVSFFTRTILLLLILLLGFCN. A disordered region spans residues 75–95; that stretch reads ASGPSRKHNDIGLLSWHRSSP.

Expressed in leaves, buds, flowers, seedlings and seeds. Detected at the base of pedicel, in the floral and funicule abscission zones and in vascular tissues.

Its subcellular location is the secreted. The protein localises to the extracellular space. In terms of biological role, may be involved in floral abscission. This is Protein IDA-LIKE 2 (IDL2) from Arabidopsis thaliana (Mouse-ear cress).